A 251-amino-acid polypeptide reads, in one-letter code: 5'-nucleotidase SurE (251 aa).

The a divalent metal cation site is built by aspartate 8, aspartate 9, serine 39, and asparagine 90.

Belongs to the SurE nucleotidase family. A divalent metal cation serves as cofactor.

Its subcellular location is the cytoplasm. The catalysed reaction is a ribonucleoside 5'-phosphate + H2O = a ribonucleoside + phosphate. Functionally, nucleotidase that shows phosphatase activity on nucleoside 5'-monophosphates. This chain is 5'-nucleotidase SurE, found in Colwellia psychrerythraea (strain 34H / ATCC BAA-681) (Vibrio psychroerythus).